Consider the following 489-residue polypeptide: Cytochrome P450 2C41 (489 aa).

Position 434 (C434) interacts with heme.

It belongs to the cytochrome P450 family. The cofactor is heme.

Its subcellular location is the endoplasmic reticulum membrane. The protein resides in the microsome membrane. It catalyses the reaction an organic molecule + reduced [NADPH--hemoprotein reductase] + O2 = an alcohol + oxidized [NADPH--hemoprotein reductase] + H2O + H(+). Functionally, cytochromes P450 are a group of heme-thiolate monooxygenases. In liver microsomes, this enzyme is involved in an NADPH-dependent electron transport pathway. It oxidizes a variety of structurally unrelated compounds, including steroids, fatty acids, and xenobiotics. This chain is Cytochrome P450 2C41 (CYP2C41), found in Canis lupus familiaris (Dog).